Reading from the N-terminus, the 368-residue chain is DNA replication and repair protein RecF (368 aa).

Residue 30-37 (GNNAQGKT) coordinates ATP.

This sequence belongs to the RecF family.

It localises to the cytoplasm. The RecF protein is involved in DNA metabolism; it is required for DNA replication and normal SOS inducibility. RecF binds preferentially to single-stranded, linear DNA. It also seems to bind ATP. In Streptococcus pyogenes serotype M12 (strain MGAS2096), this protein is DNA replication and repair protein RecF.